Here is a 244-residue protein sequence, read N- to C-terminus: Probable transcriptional regulatory protein MMOB1910 (244 aa).

This sequence belongs to the TACO1 family.

It localises to the cytoplasm. The chain is Probable transcriptional regulatory protein MMOB1910 from Mycoplasma mobile (strain ATCC 43663 / 163K / NCTC 11711) (Mesomycoplasma mobile).